A 173-amino-acid polypeptide reads, in one-letter code: Myosin light chain 5 (173 aa).

Positions 1–20 (MASRKTKKKEGGALRAQRAS) are disordered. 3 EF-hand domains span residues 30 to 65 (TQIQ…LGKT), 100 to 135 (DAEE…QADK), and 136 to 171 (MTAE…GEEK). 4 residues coordinate Ca(2+): Asp43, Asn45, Asp47, and Asp54.

In terms of assembly, myosin is a hexamer of 2 heavy chains and 4 light chains. As to expression, expressed in fetal skeletal muscle and retina.

This is Myosin light chain 5 (MYL5) from Homo sapiens (Human).